The chain runs to 257 residues: UPF0259 membrane protein WIGBR3650 (257 aa).

A run of 6 helical transmembrane segments spans residues 23–43, 89–109, 122–142, 148–168, 190–210, and 223–243; these read IIFF…IFLP, LSSL…INTI, IILS…ISFL, ALML…PILI, IKTV…ILVI, and VKIF…IYMY.

The protein belongs to the UPF0259 family.

The protein localises to the cell membrane. The polypeptide is UPF0259 membrane protein WIGBR3650 (Wigglesworthia glossinidia brevipalpis).